The chain runs to 214 residues: Guanylate kinase (214 aa).

One can recognise a Guanylate kinase-like domain in the interval 6–192; it reads GTLYIISAPS…ALEDLKAIFR (187 aa). An ATP-binding site is contributed by 13–20; that stretch reads APSGAGKT.

This sequence belongs to the guanylate kinase family.

The protein resides in the cytoplasm. The catalysed reaction is GMP + ATP = GDP + ADP. Functionally, essential for recycling GMP and indirectly, cGMP. This is Guanylate kinase from Pseudomonas savastanoi pv. phaseolicola (strain 1448A / Race 6) (Pseudomonas syringae pv. phaseolicola (strain 1448A / Race 6)).